Reading from the N-terminus, the 480-residue chain is Cysteine--tRNA ligase (480 aa).

Cys-27 serves as a coordination point for Zn(2+). The 'HIGH' region motif lies at 29-39 (PTVYNYAHIGN). Zn(2+) contacts are provided by Cys-221, His-246, and Glu-250. The 'KMSKS' region signature appears at 278-282 (KMSKS). Position 281 (Lys-281) interacts with ATP.

This sequence belongs to the class-I aminoacyl-tRNA synthetase family. As to quaternary structure, monomer. Zn(2+) serves as cofactor.

Its subcellular location is the cytoplasm. The catalysed reaction is tRNA(Cys) + L-cysteine + ATP = L-cysteinyl-tRNA(Cys) + AMP + diphosphate. This chain is Cysteine--tRNA ligase, found in Borreliella afzelii (strain PKo) (Borrelia afzelii).